The following is a 345-amino-acid chain: D-alanine--D-alanine ligase (345 aa).

The region spanning 133–340 (KLYAKERGVK…IDYRYIHQIQ (208 aa)) is the ATP-grasp domain. ATP is bound at residue 162–211 (PLIVKPLRLGSSIGVSIAKNRQELDYALDVAFEFDEAALLEPFMQGIKEY). Mg(2+)-binding residues include Asp284, Glu296, and Asn298.

The protein belongs to the D-alanine--D-alanine ligase family. The cofactor is Mg(2+). Requires Mn(2+) as cofactor.

The protein localises to the cytoplasm. The catalysed reaction is 2 D-alanine + ATP = D-alanyl-D-alanine + ADP + phosphate + H(+). It functions in the pathway cell wall biogenesis; peptidoglycan biosynthesis. Its function is as follows. Cell wall formation. This is D-alanine--D-alanine ligase from Wolinella succinogenes (strain ATCC 29543 / DSM 1740 / CCUG 13145 / JCM 31913 / LMG 7466 / NCTC 11488 / FDC 602W) (Vibrio succinogenes).